We begin with the raw amino-acid sequence, 73 residues long: Putative antitoxin VapB16 (73 aa).

This sequence belongs to the UPF0330 family.

Functionally, possibly the antitoxin component of a type II toxin-antitoxin (TA) system. Its cognate toxin is VapC16 (Potential). The chain is Putative antitoxin VapB16 (vapB16) from Archaeoglobus fulgidus (strain ATCC 49558 / DSM 4304 / JCM 9628 / NBRC 100126 / VC-16).